The primary structure comprises 256 residues: Probable hydroxyacylglutathione hydrolase SPCC13B11.03c (256 aa).

6 residues coordinate Zn(2+): histidine 63, histidine 65, aspartate 67, histidine 68, histidine 118, and aspartate 139. Substrate-binding positions include 148–150 (RFF), 178–180 (HEY), and 250–253 (RTLK). Position 178 (histidine 178) interacts with Zn(2+).

Belongs to the metallo-beta-lactamase superfamily. Glyoxalase II family. Zn(2+) is required as a cofactor.

It localises to the cytoplasm. The protein resides in the nucleus. The enzyme catalyses an S-(2-hydroxyacyl)glutathione + H2O = a 2-hydroxy carboxylate + glutathione + H(+). The catalysed reaction is (R)-S-lactoylglutathione + H2O = (R)-lactate + glutathione + H(+). The protein operates within secondary metabolite metabolism; methylglyoxal degradation; (R)-lactate from methylglyoxal: step 2/2. Thiolesterase that catalyzes the hydrolysis of S-D-lactoylglutathione to form glutathione and D-lactic acid. Involved in the metabolism of methylglyoxal, a toxic compound for yeast proliferation, by converting methylglyoxal to lactate via S-D-lactoylglutathione by sequential enzyme reactions catalyzed by glyoxalase I and glyoxalase II. The protein is Probable hydroxyacylglutathione hydrolase SPCC13B11.03c of Schizosaccharomyces pombe (strain 972 / ATCC 24843) (Fission yeast).